Here is a 337-residue protein sequence, read N- to C-terminus: Anthranilate phosphoribosyltransferase (337 aa).

5-phospho-alpha-D-ribose 1-diphosphate is bound by residues glycine 82, 85–86 (GD), threonine 90, 92–95 (NIST), 110–118 (KHGNRAMSS), and threonine 122. Glycine 82 is an anthranilate binding site. Residue serine 94 participates in Mg(2+) binding. Residue asparagine 113 participates in anthranilate binding. Residue arginine 168 coordinates anthranilate. 2 residues coordinate Mg(2+): aspartate 226 and glutamate 227.

Belongs to the anthranilate phosphoribosyltransferase family. As to quaternary structure, homodimer. The cofactor is Mg(2+).

The enzyme catalyses N-(5-phospho-beta-D-ribosyl)anthranilate + diphosphate = 5-phospho-alpha-D-ribose 1-diphosphate + anthranilate. Its pathway is amino-acid biosynthesis; L-tryptophan biosynthesis; L-tryptophan from chorismate: step 2/5. In terms of biological role, catalyzes the transfer of the phosphoribosyl group of 5-phosphorylribose-1-pyrophosphate (PRPP) to anthranilate to yield N-(5'-phosphoribosyl)-anthranilate (PRA). The sequence is that of Anthranilate phosphoribosyltransferase from Phenylobacterium zucineum (strain HLK1).